A 61-amino-acid polypeptide reads, in one-letter code: Large ribosomal subunit protein bL32 (61 aa).

Residues 1–16 (MAVPKRKTSPSKRGMR) show a composition bias toward basic residues. A disordered region spans residues 1–39 (MAVPKRKTSPSKRGMRRSADALKAPTYIEDKNSGELRRP). Basic and acidic residues predominate over residues 28-39 (IEDKNSGELRRP).

Belongs to the bacterial ribosomal protein bL32 family.

This Rhizobium meliloti (strain 1021) (Ensifer meliloti) protein is Large ribosomal subunit protein bL32.